The primary structure comprises 174 residues: Stigma-specific STIG1-like protein 4 (174 aa).

The first 25 residues, 1-25 (MMSIKLTLCALIFFLLNSLLHHVLG), serve as a signal peptide directing secretion. The tract at residues 140–174 (PSSQPGKRHRRHKFHRPRPPPSPDSKLNYDDHDDE) is disordered. Positions 145 to 157 (GKRHRRHKFHRPR) are enriched in basic residues.

It belongs to the STIG1 family.

It is found in the secreted. Functionally, endosperm-specific cysteine-rich protein that acts downstream of BHLH95/ZOU to modify the interface between embryo and endosperm and mediate the separation of these two tissues during seed development. Necessary for the biogenesis of the embryo sheath, an extracuticular endosperm-derived structure at the surface of the embryo. Required for the separation of embryo and endosperm, and for normal progression of the embryo through the endosperm tissue. Required for the formation of a normal embryonic cuticle. The sequence is that of Stigma-specific STIG1-like protein 4 from Arabidopsis thaliana (Mouse-ear cress).